A 306-amino-acid polypeptide reads, in one-letter code: MELKDYYAIMGVKPTDDLKTIKTAYRRLARKYHPDVSKEPDAEARFKEVAEAWEVLSDEQRRAEYDQMWQHRNDPQFNRQFHHGDGQSFNAEDFDDIFSSIFGQHARQSRQRPATRGHDIEIEVAVFLEETLTEHKRTISYNLPVYNAFGMIEQEIPKTLNVKIPAGVGNGQRIRLKGQGTPGENGGPNGDLWLVIHIAPHPLFDIVGQDLEIVVPVSPWEAALGAKVTVPTLKESILLTIPPGSQAGQRLRVKGKGLVSKKQTGDLYAVLKIVMPPKPDENTAALWQQLADAQSSFDPRKDWGKA.

The region spanning 5–69 (DYYAIMGVKP…QRRAEYDQMW (65 aa)) is the J domain.

It localises to the cytoplasm. It is found in the nucleoid. DNA-binding protein that preferentially recognizes a curved DNA sequence. It is probably a functional analog of DnaJ; displays overlapping activities with DnaJ, but functions under different conditions, probably acting as a molecular chaperone in an adaptive response to environmental stresses other than heat shock. Lacks autonomous chaperone activity; binds native substrates and targets them for recognition by DnaK. Its activity is inhibited by the binding of CbpM. In Escherichia coli (strain K12 / MC4100 / BW2952), this protein is Curved DNA-binding protein.